The following is an 852-amino-acid chain: SPS-sensor component SSY1 (852 aa).

Residues Met1–His285 are Cytoplasmic-facing. Residues Asp21 to Thr41 form a disordered region. Polar residues predominate over residues Ser30–Thr41. A helical transmembrane segment spans residues Ile286–Ala306. Topologically, residues Phe307 to Thr329 are extracellular. Residues Met330 to Ala350 traverse the membrane as a helical segment. The Cytoplasmic segment spans residues Ser351–Ala357. The chain crosses the membrane as a helical span at residues Phe358 to Val378. Residues Ser379 to Gly400 lie on the Extracellular side of the membrane. A helical membrane pass occupies residues Phe401–Gly421. Residue Glu422 is a topological domain, cytoplasmic. Residues Ile423–Ile443 traverse the membrane as a helical segment. At Ile444–Phe500 the chain is on the extracellular side. Residues Leu501–Phe521 traverse the membrane as a helical segment. At Leu522–Arg540 the chain is on the cytoplasmic side. Residues Thr541–Tyr561 form a helical membrane-spanning segment. The Extracellular portion of the chain corresponds to Ser562 to Gly623. Residues Leu624–Ile644 form a helical membrane-spanning segment. The Cytoplasmic portion of the chain corresponds to Ser645–Arg673. The chain crosses the membrane as a helical span at residues Gly674–Val694. Residues Asp695–Asp703 lie on the Extracellular side of the membrane. The chain crosses the membrane as a helical span at residues Val704 to Phe724. The Cytoplasmic portion of the chain corresponds to Leu725–Leu755. A helical transmembrane segment spans residues Ala756 to Ile776. Residues His777–Ala784 are Extracellular-facing. The chain crosses the membrane as a helical span at residues Phe785–Leu805. The Cytoplasmic segment spans residues Gly806–Ile852.

Belongs to the amino acid-polyamine-organocation (APC) superfamily. In terms of assembly, component of the plasma membrane SPS (SSY1-PTR3-SSY5) amino acid sensor complex. Interacts directly with PTR3 and SSY5. Interacts with YCK1.

The protein localises to the cell membrane. Its function is as follows. Amino acid sensor component of the SPS-sensor system, which regulates the expression of several amino acid-metabolizing enzymes and amino acid- and peptide-permeases in response to extracellular amino acid levels by controlling the activity of two transcription factors, STP1 and STP2. Amino-acid permease homolog that seems to interact directly with the extracellular signaling molecules, but has no amino acid transporter activity. May recruit casein kinases YCK1 and YCK2 to hyperphosphorylate and activate downstream component PTR3 in response to amino acid stimulus. The sequence is that of SPS-sensor component SSY1 (SSY1) from Saccharomyces cerevisiae (strain ATCC 204508 / S288c) (Baker's yeast).